The chain runs to 247 residues: 23S rRNA (guanosine-2'-O-)-methyltransferase RlmB (247 aa).

The S-adenosyl-L-methionine site is built by Gly-197, Ile-217, and Leu-226.

Belongs to the class IV-like SAM-binding methyltransferase superfamily. RNA methyltransferase TrmH family. RlmB subfamily.

Its subcellular location is the cytoplasm. It carries out the reaction guanosine(2251) in 23S rRNA + S-adenosyl-L-methionine = 2'-O-methylguanosine(2251) in 23S rRNA + S-adenosyl-L-homocysteine + H(+). Its function is as follows. Specifically methylates the ribose of guanosine 2251 in 23S rRNA. This chain is 23S rRNA (guanosine-2'-O-)-methyltransferase RlmB, found in Vibrio cholerae serotype O1 (strain ATCC 39315 / El Tor Inaba N16961).